A 239-amino-acid polypeptide reads, in one-letter code: DNA oxidative demethylase ALKBH2 (239 aa).

A PCNA-binding motif is present at residues 3–7 (KFLVR). The tract at residues 11–32 (RDLQGGGEEPAPTGGASGDLKS) is disordered. Residues 80-82 (FGK) and 100-102 (YTF) contribute to the substrate site. Residues 130–235 (TFNFVLVNRY…RVNLTFRKIL (106 aa)) form the Fe2OG dioxygenase domain. 2-oxoglutarate is bound by residues Asn-137, Tyr-139, and His-149. Positions 149 and 151 each coordinate Fe cation. Asp-152 is a binding site for substrate. Residues His-214, Arg-226, Thr-230, and Arg-232 each contribute to the 2-oxoglutarate site. His-214 serves as a coordination point for Fe cation.

It belongs to the alkB family. In terms of assembly, interacts with PCNA homotrimer; this interaction is enhanced during the S-phase of the cell cycle. Interacts with nucleolar proteins NCL, UBTF and NPM1. Interacts with XRCC5-XRCC6 heterodimer. Requires Fe(2+) as cofactor. As to expression, detected in liver, testis and kidney (at protein level). Detected in heart and testis.

It localises to the nucleus. The protein resides in the nucleolus. It is found in the nucleoplasm. The catalysed reaction is a methylated nucleobase within DNA + 2-oxoglutarate + O2 = a nucleobase within DNA + formaldehyde + succinate + CO2. The enzyme catalyses an N(1)-methyl-2'-deoxyadenosine in double-stranded DNA + 2-oxoglutarate + O2 = a 2'-deoxyadenosine in double-stranded DNA + formaldehyde + succinate + CO2 + H(+). It catalyses the reaction an N(1)-methyl-2'-deoxyadenosine in single-stranded DNA + 2-oxoglutarate + O2 = a 2'-deoxyadenosine in single-stranded DNA + formaldehyde + succinate + CO2 + H(+). It carries out the reaction an N(3)-methyl-2'-deoxycytidine in double-stranded DNA + 2-oxoglutarate + O2 = a 2'-deoxycytidine in double-stranded DNA + formaldehyde + succinate + CO2 + H(+). The catalysed reaction is an N(3)-methyl-2'-deoxycytidine in single-stranded DNA + 2-oxoglutarate + O2 = a 2'-deoxycytidine in single-stranded DNA + formaldehyde + succinate + CO2 + H(+). The enzyme catalyses a 1,N(6)-etheno-2'-deoxyadenosine in double-stranded DNA + 2-oxoglutarate + O2 + H2O = a 2'-deoxyadenosine in double-stranded DNA + glyoxal + succinate + CO2. It catalyses the reaction a 1,N(6)-etheno-2'-deoxyadenosine in single-stranded DNA + 2-oxoglutarate + O2 + H2O = a 2'-deoxyadenosine in single-stranded DNA + glyoxal + succinate + CO2. It carries out the reaction a 3,N(4)-etheno-2'-deoxycytidine in double-stranded DNA + 2-oxoglutarate + O2 + H2O = a 2'-deoxycytidine in double-stranded DNA + glyoxal + succinate + CO2. The catalysed reaction is a 3,N(4)-etheno-2'-deoxycytidine in single-stranded DNA + 2-oxoglutarate + O2 + H2O = a 2'-deoxycytidine in single-stranded DNA + glyoxal + succinate + CO2. The enzyme catalyses a 1,N(2)-etheno-2'-deoxyguanosine in double-stranded DNA + 2-oxoglutarate + O2 + H2O = a 2'-deoxyguanosine in double-stranded DNA + glyoxal + succinate + CO2. With respect to regulation, activated by magnesium ions. Dioxygenase that repairs alkylated nucleic acid bases by direct reversal oxidative dealkylation. Can process both double-stranded (ds) and single-stranded (ss) DNA substrates, with a strong preference for dsDNA. Uses molecular oxygen, 2-oxoglutarate and iron as cofactors to oxidize the alkyl groups that are subsequently released as aldehydes, regenerating the undamaged bases. Probes the base pair stability, locates a weakened base pair and flips the damaged base to accommodate the lesion in its active site for efficient catalysis. Repairs monoalkylated bases, specifically N1-methyladenine and N3-methylcytosine, as well as higher order alkyl adducts such as bases modified with exocyclic bridged adducts known as etheno adducts including 1,N6-ethenoadenine, 3,N4-ethenocytosine and 1,N2-ethenoguanine. Acts as a gatekeeper of genomic integrity under alkylation stress. Efficiently repairs alkylated lesions in ribosomal DNA (rDNA). These lesions can cause ss- and dsDNA strand breaks that severely impair rDNA transcription. In a response mechanism to DNA damage, associates with PCNA at replication forks to repair alkylated adducts prior to replication. The protein is DNA oxidative demethylase ALKBH2 (Alkbh2) of Mus musculus (Mouse).